The chain runs to 324 residues: Signal peptidase I (324 aa).

Met-1 carries the post-translational modification Blocked amino end (Met). Topologically, residues 1–3 are periplasmic; that stretch reads MAN. Residues 4–22 form a helical membrane-spanning segment; it reads MFALILVIATLVTGILWCV. At 23–58 the chain is on the cytoplasmic side; the sequence is DKFFFAPKRRERQAAAQAAAGDSLDKATLKKVAPKP. Residues 59-77 form a helical membrane-spanning segment; it reads GWLETGASVFPVLAIVLIV. Residues 78–324 are Periplasmic-facing; it reads RSFIYEPFQI…LRLSRIGGIH (247 aa). Catalysis depends on residues Ser-91 and Lys-146. Cys-171 and Cys-177 are joined by a disulfide.

This sequence belongs to the peptidase S26 family.

Its subcellular location is the cell inner membrane. It carries out the reaction Cleavage of hydrophobic, N-terminal signal or leader sequences from secreted and periplasmic proteins.. In Escherichia coli (strain K12), this protein is Signal peptidase I (lepB).